Reading from the N-terminus, the 132-residue chain is Small ribosomal subunit protein uS8 (132 aa).

It belongs to the universal ribosomal protein uS8 family. Part of the 30S ribosomal subunit. Contacts proteins S5 and S12.

Functionally, one of the primary rRNA binding proteins, it binds directly to 16S rRNA central domain where it helps coordinate assembly of the platform of the 30S subunit. In Desulfitobacterium hafniense (strain DSM 10664 / DCB-2), this protein is Small ribosomal subunit protein uS8.